The sequence spans 202 residues: MIDFLKGRLVSVYPEAVVVEVGGIGYRVQVPPSLAASLPEPGETVFLYTYLSVKETALEMFGFSSELDRTAFLLLLGVAGIGPRTALAVVGRLGTRRLWAAILREDTGILTTVPGIGVKSARRIMVELRDRLEKQQVAVSAELPASDGVPVLAGRAENEALAALISLGYTPREAREALNRLPDRKLDAAGLVHAALRIMGSQ.

A domain I region spans residues 1–64 (MIDFLKGRLV…ETALEMFGFS (64 aa)). Residues 65–143 (SELDRTAFLL…KQQVAVSAEL (79 aa)) are domain II. Positions 144 to 152 (PASDGVPVL) are flexible linker. Residues 152–202 (LAGRAENEALAALISLGYTPREAREALNRLPDRKLDAAGLVHAALRIMGSQ) are domain III.

The protein belongs to the RuvA family. In terms of assembly, homotetramer. Forms an RuvA(8)-RuvB(12)-Holliday junction (HJ) complex. HJ DNA is sandwiched between 2 RuvA tetramers; dsDNA enters through RuvA and exits via RuvB. An RuvB hexamer assembles on each DNA strand where it exits the tetramer. Each RuvB hexamer is contacted by two RuvA subunits (via domain III) on 2 adjacent RuvB subunits; this complex drives branch migration. In the full resolvosome a probable DNA-RuvA(4)-RuvB(12)-RuvC(2) complex forms which resolves the HJ.

It is found in the cytoplasm. The RuvA-RuvB-RuvC complex processes Holliday junction (HJ) DNA during genetic recombination and DNA repair, while the RuvA-RuvB complex plays an important role in the rescue of blocked DNA replication forks via replication fork reversal (RFR). RuvA specifically binds to HJ cruciform DNA, conferring on it an open structure. The RuvB hexamer acts as an ATP-dependent pump, pulling dsDNA into and through the RuvAB complex. HJ branch migration allows RuvC to scan DNA until it finds its consensus sequence, where it cleaves and resolves the cruciform DNA. This Desulforudis audaxviator (strain MP104C) protein is Holliday junction branch migration complex subunit RuvA.